A 285-amino-acid polypeptide reads, in one-letter code: Bifunctional protein FolD (285 aa).

NADP(+) contacts are provided by residues 165–167 and Ser190; that span reads GRS.

The protein belongs to the tetrahydrofolate dehydrogenase/cyclohydrolase family. In terms of assembly, homodimer.

It catalyses the reaction (6R)-5,10-methylene-5,6,7,8-tetrahydrofolate + NADP(+) = (6R)-5,10-methenyltetrahydrofolate + NADPH. It carries out the reaction (6R)-5,10-methenyltetrahydrofolate + H2O = (6R)-10-formyltetrahydrofolate + H(+). The protein operates within one-carbon metabolism; tetrahydrofolate interconversion. Its function is as follows. Catalyzes the oxidation of 5,10-methylenetetrahydrofolate to 5,10-methenyltetrahydrofolate and then the hydrolysis of 5,10-methenyltetrahydrofolate to 10-formyltetrahydrofolate. The sequence is that of Bifunctional protein FolD from Burkholderia pseudomallei (strain 1106a).